A 373-amino-acid chain; its full sequence is Citrate synthase (373 aa).

Active-site residues include His262 and Asp314.

The protein belongs to the citrate synthase family. As to quaternary structure, homohexamer.

It catalyses the reaction oxaloacetate + acetyl-CoA + H2O = citrate + CoA + H(+). The protein operates within carbohydrate metabolism; tricarboxylic acid cycle; isocitrate from oxaloacetate: step 1/2. The chain is Citrate synthase (ctsA) from Heyndrickxia coagulans (Weizmannia coagulans).